Consider the following 68-residue polypeptide: Conotoxin Lt5.11 (68 aa).

The N-terminal stretch at 1 to 19 is a signal peptide; that stretch reads MLCLPVFIILLLLASPAAP. A propeptide spanning residues 20–54 is cleaved from the precursor; sequence KSLETRIQNDLIRAGLTDADLKTEKGFLSGLLNVA.

This sequence belongs to the conotoxin T superfamily. Contains 2 disulfide bonds that can be either 'C1-C3, C2-C4' or 'C1-C4, C2-C3', since these disulfide connectivities have been observed for conotoxins with cysteine framework V (for examples, see AC P0DQQ7 and AC P81755). Expressed by the venom duct.

It localises to the secreted. This Conus litteratus (Lettered cone) protein is Conotoxin Lt5.11.